A 209-amino-acid chain; its full sequence is Peptide methionine sulfoxide reductase MsrA (209 aa).

Residue Cys51 is part of the active site.

This sequence belongs to the MsrA Met sulfoxide reductase family.

It carries out the reaction L-methionyl-[protein] + [thioredoxin]-disulfide + H2O = L-methionyl-(S)-S-oxide-[protein] + [thioredoxin]-dithiol. The enzyme catalyses [thioredoxin]-disulfide + L-methionine + H2O = L-methionine (S)-S-oxide + [thioredoxin]-dithiol. Functionally, has an important function as a repair enzyme for proteins that have been inactivated by oxidation. Catalyzes the reversible oxidation-reduction of methionine sulfoxide in proteins to methionine. The protein is Peptide methionine sulfoxide reductase MsrA of Vibrio vulnificus (strain CMCP6).